Here is a 175-residue protein sequence, read N- to C-terminus: Large ribosomal subunit protein uL10 (175 aa).

Belongs to the universal ribosomal protein uL10 family. In terms of assembly, part of the ribosomal stalk of the 50S ribosomal subunit. The N-terminus interacts with L11 and the large rRNA to form the base of the stalk. The C-terminus forms an elongated spine to which L12 dimers bind in a sequential fashion forming a multimeric L10(L12)X complex.

Its function is as follows. Forms part of the ribosomal stalk, playing a central role in the interaction of the ribosome with GTP-bound translation factors. This Mycolicibacterium smegmatis (strain ATCC 700084 / mc(2)155) (Mycobacterium smegmatis) protein is Large ribosomal subunit protein uL10.